Reading from the N-terminus, the 71-residue chain is ATP synthase subunit c (71 aa).

A run of 2 helical transmembrane segments spans residues 4–24 (IAAAIAIMGAAIGAGYGNGQV) and 47–67 (FIGVALVEAVPILGVVIALIL).

It belongs to the ATPase C chain family. As to quaternary structure, F-type ATPases have 2 components, F(1) - the catalytic core - and F(0) - the membrane proton channel. F(1) has five subunits: alpha(3), beta(3), gamma(1), delta(1), epsilon(1). F(0) has three main subunits: a(1), b(2) and c(10-14). The alpha and beta chains form an alternating ring which encloses part of the gamma chain. F(1) is attached to F(0) by a central stalk formed by the gamma and epsilon chains, while a peripheral stalk is formed by the delta and b chains.

Its subcellular location is the cell membrane. Functionally, f(1)F(0) ATP synthase produces ATP from ADP in the presence of a proton or sodium gradient. F-type ATPases consist of two structural domains, F(1) containing the extramembraneous catalytic core and F(0) containing the membrane proton channel, linked together by a central stalk and a peripheral stalk. During catalysis, ATP synthesis in the catalytic domain of F(1) is coupled via a rotary mechanism of the central stalk subunits to proton translocation. Key component of the F(0) channel; it plays a direct role in translocation across the membrane. A homomeric c-ring of between 10-14 subunits forms the central stalk rotor element with the F(1) delta and epsilon subunits. This chain is ATP synthase subunit c, found in Enterococcus hirae (strain ATCC 9790 / DSM 20160 / JCM 8729 / LMG 6399 / NBRC 3181 / NCIMB 6459 / NCDO 1258 / NCTC 12367 / WDCM 00089 / R).